Consider the following 202-residue polypeptide: Imidazoleglycerol-phosphate dehydratase (202 aa).

This sequence belongs to the imidazoleglycerol-phosphate dehydratase family.

Its subcellular location is the cytoplasm. The catalysed reaction is D-erythro-1-(imidazol-4-yl)glycerol 3-phosphate = 3-(imidazol-4-yl)-2-oxopropyl phosphate + H2O. Its pathway is amino-acid biosynthesis; L-histidine biosynthesis; L-histidine from 5-phospho-alpha-D-ribose 1-diphosphate: step 6/9. In Corynebacterium glutamicum (strain ATCC 13032 / DSM 20300 / JCM 1318 / BCRC 11384 / CCUG 27702 / LMG 3730 / NBRC 12168 / NCIMB 10025 / NRRL B-2784 / 534), this protein is Imidazoleglycerol-phosphate dehydratase.